The following is a 1194-amino-acid chain: MKCFFPVLSCLAVLGVVSAQRQVTVQEGPLYRTESSHITIWCNVSGYQGPSEQNFQWSIYLPSAPEREVQIVSTVDSSFPYAIYTQRVRGGKIYVERIQGNSALLHITDLQARDAGEYECHTPNTDERYFGSYSAKMNLVVIPDSLQTTAVPQTLHKVEQDPLELSCEVATETVQHTHLSVSWLRQKGGENPVEVISLSRDFILHSSSEYAQRQSLGEVRLDKLGRSTFRLTIFHLQPSDQGEFYCEAAEWIQDPDGSWYAMTRKRSEGAVVNVQPTDKEFTVRLETDKRLHTVGEPVEFRCILEAQNIPDRYFAVSWAFNSSLIATMGPNAVPVLNSDFAHREAKGQLKVAKESDGVFVLKIYHLRQEDSGKYNCRVTEREKTVTGEFIDKESKRPKNIPIVVLPLKSSISVEVASNASVVLEGEDLHFSCTVRTVGRLQARFSVIWQLVDRQNRRSNVMWLDRDGTLQPGSAYWERSSYGGIQMEQVQPNSFSLGIFNSRKEDEGQYECHVTEWVRAVDGEWQIVGERRASTLVSITALETGFAVTAISRTPGVTYSDSFDLQCIIKPHYPARVPVSVTWRFQPVGTVEFHDLVTFTRDGGVQWGDKSSTFRTRTAIEKAESSNNVRLSISRASDTEAGKYQCVAELWRRNYNNTWTRLAERTSNLLEIRVLQPVTKLQVSKSKRTLTLVENRAIQLNCSVKSQTSPNSHFAVLWYVHKPSDADGKLILKTTHSSAFEYGTYAEEEGLRGRLQFERHVSGGLFSLTVQRAEVSDSGSYYCHVEEWLLSPNYAWYKLAEEVSGRTEVTVKQPDSRLKLSQVQGSLSVLETRQIQLECVVLNRTSVASQLLVEWFVWKPNHPEREVVAHLSRDATFHYGEQAAKNNLKGRLHAESPSSGVYRLFIQNVAVQDSGTYSCRVEEWLPSPSGVWYKRAEDTAGQTAVTVMRPDAALQVDTVVPNATVTEKAAFQLDCSILSRSSQDSRFAVAWYSLRTKGGGKRGSLGIDEQEEEEEEEDISQEEDSEDPTERTVLLSVGPDAVFGPEGSPWEGRLRFQRLSPLLYRLTVLEASPQDTGNYSCHVEEWLPSPQKEWYRLTEEESAPIGIRVLDTSSTLQSLICSNDALFYFVFFYPFPIFGILIITILLVRFKSRNSSKNSEGKNGVPLLWIKEPHLNYSPTCLEPPVLSIHPGAID.

The signal sequence occupies residues 1 to 19; that stretch reads MKCFFPVLSCLAVLGVVSA. 8 Ig-like C2-type domains span residues 20-138, 143-262, 276-386, 401-539, 545-661, 676-803, 813-945, and 949-1097; these read QRQV…AKMN, PDSL…WYAM, PTDK…KTVT, PIVV…VSIT, FAVT…WTRL, PVTK…EEVS, PDSR…TAVT, and PDAA…YRLT. The Extracellular segment spans residues 20–1124; it reads QRQVTVQEGP…LQSLICSNDA (1105 aa). Disulfide bonds link Cys42–Cys120 and Cys167–Cys246. Residue Asn43 is glycosylated (N-linked (GlcNAc...) asparagine). The EWI motif motif lies at 250–252; that stretch reads EWI. A disulfide bond links Cys302 and Cys376. The N-linked (GlcNAc...) asparagine glycan is linked to Asn418. 5 cysteine pairs are disulfide-bonded: Cys432/Cys511, Cys566/Cys645, Cys701/Cys782, Cys838/Cys918, and Cys974/Cys1080. N-linked (GlcNAc...) asparagine glycosylation occurs at Asn842. The tract at residues 997 to 1030 is disordered; that stretch reads GGGKRGSLGIDEQEEEEEEEDISQEEDSEDPTER. Over residues 1007–1026 the composition is skewed to acidic residues; the sequence is DEQEEEEEEEDISQEEDSED. An N-linked (GlcNAc...) asparagine glycan is attached at Asn1077. The chain crosses the membrane as a helical span at residues 1125-1145; that stretch reads LFYFVFFYPFPIFGILIITIL. Topologically, residues 1146–1194 are cytoplasmic; that stretch reads LVRFKSRNSSKNSEGKNGVPLLWIKEPHLNYSPTCLEPPVLSIHPGAID.

In terms of tissue distribution, expressed in the lacrimal duct and lacrimal gland.

It localises to the membrane. The polypeptide is Immunoglobulin superfamily member 3 (Igsf3) (Mus musculus (Mouse)).